We begin with the raw amino-acid sequence, 330 residues long: uncharacterized protein (330 aa).

The region spanning 96-256 is the JmjC domain; it reads AALEFDFTDL…LMLAALRKKL (161 aa). The Fe cation site is built by H145, D147, and H224.

It belongs to the ROX family. Requires Fe(2+) as cofactor.

This is an uncharacterized protein from Bacillus subtilis (strain 168).